We begin with the raw amino-acid sequence, 701 residues long: Coiled-coil domain-containing protein 62 (701 aa).

Coiled coils occupy residues 61–197 and 241–342; these read ETST…LQAR and TCVV…QFLN. The tract at residues 624 to 652 is disordered; it reads KSAEREEESAALPDRRTSANEKDDFSPTS. Over residues 636–648 the composition is skewed to basic and acidic residues; it reads PDRRTSANEKDDF. 2 short sequence motifs (LXXLL motif) span residues 654–658 and 670–674; these read LQRLL and LSTLL.

As to quaternary structure, interacts with ESR1 and ESR2 in the presence of estradiol/E2. The interaction with ESR2 recruits CCDC62 to ER target genes, including cyclin-D1/CCND1 AP-1 promoter. Interacts with GOPC. In terms of tissue distribution, highly expressed in testis, not detected in other tissues (at protein level). Expressed at low levels in the epididymis, lung, spleen, bladder, kidney, liver, muscle.

It is found in the cytoplasm. The protein localises to the nucleus. The protein resides in the cytoplasmic vesicle. Its subcellular location is the secretory vesicle. It localises to the acrosome. Its function is as follows. Nuclear receptor coactivator that can enhance preferentially estrogen receptors ESR1 and ESR2 transactivation. Also modulates progesterone/PGR, glucocorticoid/NR3C1 and androgen/AR receptors transactivation, although at lower level; little effect on vitamin D receptor/VDR. Required for normal spermiogenesis. It probably plays a role in acrosome formation. This Mus musculus (Mouse) protein is Coiled-coil domain-containing protein 62 (Ccdc62).